The following is a 264-amino-acid chain: Small ribosomal subunit protein eS1 (264 aa).

The segment covering 236 to 255 (GEGGSGKRGEAGDKSERPEG) has biased composition (basic and acidic residues). The tract at residues 236–264 (GEGGSGKRGEAGDKSERPEGYEPPVQESV) is disordered.

This sequence belongs to the eukaryotic ribosomal protein eS1 family. In terms of assembly, component of the small ribosomal subunit. Mature ribosomes consist of a small (40S) and a large (60S) subunit. The 40S subunit contains about 33 different proteins and 1 molecule of RNA (18S). The 60S subunit contains about 49 different proteins and 3 molecules of RNA (28S, 5.8S and 5S).

The protein resides in the cytoplasm. This is Small ribosomal subunit protein eS1 from Spodoptera frugiperda (Fall armyworm).